Consider the following 343-residue polypeptide: MNILSMTYEKFVQKIQELGLEKYRADQILDWIYKKHVFVFEQMTNLSKQHRSLLRENFCIQIPKIVSKRVSSIDKTTKYLYELSDGNTIESVLLFHEGYATACISTQIGCPVKCSFCATGQSGFVRNLDAGEIVSQILAIEKDSKQTVRNIVYMGMGEPLLNYDNVIKSIKILIDKKTKNIGIRRVTLSTVGIPEMILKLSEERLDLNLAISLHASTNEKRDQIIPINRKYSIQEIINAAKNYQERSDRRLTIEYILIKEFNDFDEDARKLAKLLNGLKVFVNLIPVNSTFSNFEKPAKWKINRFKEILINSGIEAEIRYEKGADIEAACGQLRIRNLLSKQL.

Glu-90 functions as the Proton acceptor in the catalytic mechanism. The 230-residue stretch at 96–325 (HEGYATACIS…AEIRYEKGAD (230 aa)) folds into the Radical SAM core domain. A disulfide bridge links Cys-103 with Cys-330. [4Fe-4S] cluster is bound by residues Cys-110, Cys-114, and Cys-117. Residues 157 to 158 (GE), Ser-189, 212 to 214 (SLH), and Asn-288 contribute to the S-adenosyl-L-methionine site. Cys-330 acts as the S-methylcysteine intermediate in catalysis.

It belongs to the radical SAM superfamily. RlmN family. [4Fe-4S] cluster is required as a cofactor.

It localises to the cytoplasm. The catalysed reaction is adenosine(2503) in 23S rRNA + 2 reduced [2Fe-2S]-[ferredoxin] + 2 S-adenosyl-L-methionine = 2-methyladenosine(2503) in 23S rRNA + 5'-deoxyadenosine + L-methionine + 2 oxidized [2Fe-2S]-[ferredoxin] + S-adenosyl-L-homocysteine. The enzyme catalyses adenosine(37) in tRNA + 2 reduced [2Fe-2S]-[ferredoxin] + 2 S-adenosyl-L-methionine = 2-methyladenosine(37) in tRNA + 5'-deoxyadenosine + L-methionine + 2 oxidized [2Fe-2S]-[ferredoxin] + S-adenosyl-L-homocysteine. Its function is as follows. Specifically methylates position 2 of adenine 2503 in 23S rRNA and position 2 of adenine 37 in tRNAs. This chain is Probable dual-specificity RNA methyltransferase RlmN, found in Pseudothermotoga lettingae (strain ATCC BAA-301 / DSM 14385 / NBRC 107922 / TMO) (Thermotoga lettingae).